A 38-amino-acid chain; its full sequence is Zinc-containing ferredoxin (38 aa).

Polar residues predominate over residues 1–11; that stretch reads GIDPNFRTSRP. A disordered region spans residues 1 to 38; the sequence is GIDPNFRTSRPVTGDHAGHKVYAPADPPVKEKALGIHG. Residues 1–38 are N-terminal extension; that stretch reads GIDPNFRTSRPVTGDHAGHKVYAPADPPVKEKALGIHG. His16 and His19 together coordinate Zn(2+). Over residues 28–38 the composition is skewed to basic and acidic residues; the sequence is PVKEKALGIHG. Lys30 is modified (N6-methyllysine). His37 contacts Zn(2+).

[3Fe-4S] cluster is required as a cofactor. It depends on [4Fe-4S] cluster as a cofactor. Zn(2+) serves as cofactor.

In terms of biological role, ferredoxins are iron-sulfur proteins that transfer electrons in a wide variety of metabolic reactions. The sequence is that of Zinc-containing ferredoxin (zfx) from Metallosphaera prunae.